The following is a 697-amino-acid chain: MPSAPSTPPSKRKSKFSGFGKFFKPWKWRKRKSSDSFRETQEVLERKISMRKPREELVKRGLIVDVPEEDVSIPSESPPLRNGHMNVKHANLPEDSGGLKRKTRPDSTGHRPKSGETTAQPRSTAEVAPMELHATADVSPMQPQASAEVAPAQPRPASEVGQVQPRPISEVAPMQPRPISEVAPVHPRHVPEKTSEKYRPKSEVAPVRTSRPTSEVAPVQKVSRDFSKQPLLPPKRPLSSSTSVTQESAVGGQKFDPSTRPQSSTPVPTPRTIHPPVSSKQPPVPPPKPQNRNSNPLMAELSLALAGNTLSPAGSRPSPPLPPKRAMPPSTDAVTNKEKALRPASLPPIPANEIAAPSPPSPPVSSRIPAPNPPVPPLTLAPPISEVEKERSASPIPLHIRIQQALNSPQPLPLLDSSQRAQSLLFMQHEVGPSEEGTRVRSLPVTIELLKVPDDDDDEDELSLEDESLSPDSSESHPSRVYIGDVPSVTVIPSYLPTCVQEEDEEEGVSDTDSEGPVLYREEDEDEEEEETSSLANKVKRKDTLAMKLSGRMAPQDSNTELPHRSKDEWNQIRQQIGTQLNRRLSQRPTAEELEQRNILQKNEADRLAEKKEIKRRLTRKLSQRPTVAELLERKILRFNEYVEVTDAHDYDRRADKPWTRLTPADKAAIRKELNEFKSTEMAVHDESKHFTRFHRP.

The stretch at 42–67 (EVLERKISMRKPREELVKRGLIVDVP) is one RPEL 1 repeat. Disordered stretches follow at residues 63–381 (IVDV…LTLA) and 450–569 (LKVP…SKDE). Positions 189-202 (HVPEKTSEKYRPKS) are enriched in basic and acidic residues. Pro residues-rich tracts occupy residues 317–326 (PSPPLPPKRA) and 370–380 (APNPPVPPLTL). 3 stretches are compositionally biased toward acidic residues: residues 454-469 (DDDD…DESL), 501-514 (QEED…DTDS), and 522-532 (EEDEDEEEEET). RPEL repeat units follow at residues 579-604 (TQLN…QKNE) and 616-641 (RRLT…RFNE).

Belongs to the phosphatase and actin regulator family. As to quaternary structure, binds ppp1ca and actin.

Its subcellular location is the cytoplasm. The protein localises to the cell projection. It localises to the lamellipodium. Regulator of protein phosphatase 1 (PP1) required for neural tube and optic fissure closure, and enteric neural crest cell (ENCCs) migration during development. Acts as an activator of PP1. During neural tube closure, localizes to the ventral neural tube and activates PP1, leading to down-regulate cell proliferation within cranial neural tissue and the neural retina. Also acts as a regulator of migration of enteric neural crest cells (ENCCs) by activating PP1, leading to repression of the integrin signaling through the rho/rock pathway. This is Phosphatase and actin regulator 4-B (phactr4-b) from Xenopus laevis (African clawed frog).